Reading from the N-terminus, the 639-residue chain is Chaperone protein DnaK 1 (639 aa).

The residue at position 199 (threonine 199) is a Phosphothreonine; by autocatalysis. The segment covering 603 to 612 has biased composition (low complexity); that stretch reads QQQAQAQQAP. The segment at 603-639 is disordered; that stretch reads QQQAQAQQAPGGEGEQEAKQDDNVVDAEFEEVKDEKK. The span at 625 to 639 shows a compositional bias: acidic residues; sequence NVVDAEFEEVKDEKK.

It belongs to the heat shock protein 70 family.

Its function is as follows. Acts as a chaperone. The sequence is that of Chaperone protein DnaK 1 from Photobacterium profundum (strain SS9).